Reading from the N-terminus, the 314-residue chain is Acetaldehyde dehydrogenase 1 (314 aa).

15-18 (SGNI) contacts NAD(+). Cys133 acts as the Acyl-thioester intermediate in catalysis. Residues 164–172 (SAGPGTRAN) and Asn291 contribute to the NAD(+) site.

The protein belongs to the acetaldehyde dehydrogenase family.

The enzyme catalyses acetaldehyde + NAD(+) + CoA = acetyl-CoA + NADH + H(+). This chain is Acetaldehyde dehydrogenase 1, found in Paraburkholderia xenovorans (strain LB400).